The following is a 235-amino-acid chain: MTELARLKFYATQPHSCSYLPEEQATTLFLDPSQPMDVHVYADLSEMGFRRSGDHLYRPHCQNCNACVPARIPAARFIPNRQQRRILKRNADLTVTAARPAFKEEYFELYRRYIETRHADGDMYPPSRDQFSTFLVRDLPFCWFYEFRLEGRLMAVAVCDLLPNGLSAVYTFYEPDEDRRSLGRFAILWQITEALRQNLEAVYLGYWIKNCKKMNYKTQYRPIELLINQRWVTLN.

The protein belongs to the R-transferase family. Bpt subfamily.

Its subcellular location is the cytoplasm. The catalysed reaction is N-terminal L-glutamyl-[protein] + L-leucyl-tRNA(Leu) = N-terminal L-leucyl-L-glutamyl-[protein] + tRNA(Leu) + H(+). The enzyme catalyses N-terminal L-aspartyl-[protein] + L-leucyl-tRNA(Leu) = N-terminal L-leucyl-L-aspartyl-[protein] + tRNA(Leu) + H(+). Functionally, functions in the N-end rule pathway of protein degradation where it conjugates Leu from its aminoacyl-tRNA to the N-termini of proteins containing an N-terminal aspartate or glutamate. The sequence is that of Aspartate/glutamate leucyltransferase from Pseudomonas putida (strain ATCC 700007 / DSM 6899 / JCM 31910 / BCRC 17059 / LMG 24140 / F1).